A 259-amino-acid polypeptide reads, in one-letter code: Adenosylcobinamide-GDP ribazoletransferase (259 aa).

A run of 5 helical transmembrane segments spans residues 43–63, 64–84, 116–136, 141–161, and 185–205; these read LAGA…LGLG, ASSM…TGAL, FGVL…ASLV, PINV…LMVW, and TLYT…APVT.

Belongs to the CobS family. Mg(2+) is required as a cofactor.

The protein localises to the cell inner membrane. The enzyme catalyses alpha-ribazole + adenosylcob(III)inamide-GDP = adenosylcob(III)alamin + GMP + H(+). It carries out the reaction alpha-ribazole 5'-phosphate + adenosylcob(III)inamide-GDP = adenosylcob(III)alamin 5'-phosphate + GMP + H(+). It functions in the pathway cofactor biosynthesis; adenosylcobalamin biosynthesis; adenosylcobalamin from cob(II)yrinate a,c-diamide: step 7/7. Functionally, joins adenosylcobinamide-GDP and alpha-ribazole to generate adenosylcobalamin (Ado-cobalamin). Also synthesizes adenosylcobalamin 5'-phosphate from adenosylcobinamide-GDP and alpha-ribazole 5'-phosphate. The protein is Adenosylcobinamide-GDP ribazoletransferase of Allorhizobium ampelinum (strain ATCC BAA-846 / DSM 112012 / S4) (Agrobacterium vitis (strain S4)).